Consider the following 203-residue polypeptide: Small ribosomal subunit protein uS5 (203 aa).

Over residues 1–25 the composition is skewed to basic and acidic residues; the sequence is MPGRTRRDGGSESGGKDRRDRRDGG. Positions 1–36 are disordered; sequence MPGRTRRDGGSESGGKDRRDRRDGGRGGAAQEKTPQ. An S5 DRBM domain is found at 36–99; that stretch reads QFERVVTINR…EEAKKNFFRV (64 aa).

This sequence belongs to the universal ribosomal protein uS5 family. Part of the 30S ribosomal subunit. Contacts proteins S4 and S8.

Functionally, with S4 and S12 plays an important role in translational accuracy. Its function is as follows. Located at the back of the 30S subunit body where it stabilizes the conformation of the head with respect to the body. The sequence is that of Small ribosomal subunit protein uS5 from Saccharopolyspora erythraea (strain ATCC 11635 / DSM 40517 / JCM 4748 / NBRC 13426 / NCIMB 8594 / NRRL 2338).